Reading from the N-terminus, the 433-residue chain is Histidinol dehydrogenase (433 aa).

NAD(+) contacts are provided by Y129, Q191, and N214. Substrate is bound by residues S237, Q259, and H262. Zn(2+) contacts are provided by Q259 and H262. Catalysis depends on proton acceptor residues E326 and H327. Positions 327, 360, 414, and 419 each coordinate substrate. D360 lines the Zn(2+) pocket. H419 contacts Zn(2+).

It belongs to the histidinol dehydrogenase family. Zn(2+) is required as a cofactor.

It catalyses the reaction L-histidinol + 2 NAD(+) + H2O = L-histidine + 2 NADH + 3 H(+). It functions in the pathway amino-acid biosynthesis; L-histidine biosynthesis; L-histidine from 5-phospho-alpha-D-ribose 1-diphosphate: step 9/9. Its function is as follows. Catalyzes the sequential NAD-dependent oxidations of L-histidinol to L-histidinaldehyde and then to L-histidine. This Methanosarcina barkeri (strain Fusaro / DSM 804) protein is Histidinol dehydrogenase.